The following is a 130-amino-acid chain: MNLIEQIEKEEIARLTANKTIPAFAPGDTVVVSVNVVEGNRKRVQAYEGVVIAKRNRGLNSSFIVRKISSGEGVERTFQLYSPLIAGIEVKRRGDVRRAKLYYLRQRSGKSARIKEKLVSKAAAAAKAAE.

It belongs to the bacterial ribosomal protein bL19 family.

In terms of biological role, this protein is located at the 30S-50S ribosomal subunit interface and may play a role in the structure and function of the aminoacyl-tRNA binding site. The polypeptide is Large ribosomal subunit protein bL19 (Cupriavidus taiwanensis (strain DSM 17343 / BCRC 17206 / CCUG 44338 / CIP 107171 / LMG 19424 / R1) (Ralstonia taiwanensis (strain LMG 19424))).